The primary structure comprises 912 residues: LPS-assembly protein LptD (912 aa).

The signal sequence occupies residues 1-27 (MLYSPLYQSIRLILFGALGLSSLTVSA).

Belongs to the LptD family. Component of the lipopolysaccharide transport and assembly complex. Interacts with LptE and LptA.

It is found in the cell outer membrane. In terms of biological role, together with LptE, is involved in the assembly of lipopolysaccharide (LPS) at the surface of the outer membrane. This chain is LPS-assembly protein LptD, found in Psychrobacter arcticus (strain DSM 17307 / VKM B-2377 / 273-4).